The chain runs to 124 residues: Cytochrome c2 (124 aa).

Gln-1 is modified (pyrrolidone carboxylic acid). Cys-16, Cys-19, His-20, and Met-85 together coordinate heme c.

It belongs to the cytochrome c family. Binds 1 heme c group covalently per subunit.

Its subcellular location is the periplasm. Cytochrome c2 is found mainly in purple, non-sulfur, photosynthetic bacteria where it functions as the electron donor to the oxidized bacteriochlorophyll in the photophosphorylation pathway. However, it may also have a role in the respiratory chain and is found in some non-photosynthetic bacteria. In Afifella marina (Rhodobium marinum), this protein is Cytochrome c2.